Consider the following 155-residue polypeptide: Small ribosomal subunit protein uS7c (155 aa).

It belongs to the universal ribosomal protein uS7 family. In terms of assembly, part of the 30S ribosomal subunit.

The protein resides in the plastid. It is found in the chloroplast. One of the primary rRNA binding proteins, it binds directly to 16S rRNA where it nucleates assembly of the head domain of the 30S subunit. This Beta vulgaris (Sugar beet) protein is Small ribosomal subunit protein uS7c.